Consider the following 254-residue polypeptide: HTH-type transcriptional regulator GolR (254 aa).

An HTH deoR-type domain is found at 3 to 58 (PFERQNKIIHLLDQNNKITVPELSRILDVSISTIRNDLSALEESGMIKKVHGGAVL). Positions 20–39 (ITVPELSRILDVSISTIRND) form a DNA-binding region, H-T-H motif.

In terms of biological role, involved in the glycerol metabolism. Repressor of the gol operon for glycerol metabolism. This Listeria innocua serovar 6a (strain ATCC BAA-680 / CLIP 11262) protein is HTH-type transcriptional regulator GolR.